The following is a 153-amino-acid chain: Myosin regulatory light chain, smooth muscle (153 aa).

EF-hand domains are found at residues 12-47, 81-116, and 117-152; these read SQIQ…LGRG, DPEE…QADR, and FSQS…GQEE. The Ca(2+) site is built by D25, N27, D29, and D36.

In molluscan muscle, calcium regulation is associated with myosin rather than with actin. Muscle myosin contains two types of light chains: the catalytic light chain, essential for ATPase activity, and the regulatory light chain, a calcium-binding protein responsible for Ca(2+) dependent binding and Ca(2+) dependent Mg-ATPase activity. The sequence is that of Myosin regulatory light chain, smooth muscle from Halocynthia roretzi (Sea squirt).